The primary structure comprises 60 residues: Potassium channel toxin MeuTXKalpha3 (60 aa).

An N-terminal signal peptide occupies residues methionine 1–cysteine 22. 3 disulfide bridges follow: cysteine 32-cysteine 50, cysteine 37-cysteine 55, and cysteine 41-cysteine 57. Proline 59 is subject to Proline amide.

It belongs to the short scorpion toxin superfamily. Potassium channel inhibitor family. In terms of tissue distribution, expressed by the venom gland.

The protein resides in the secreted. May block voltage-gated potassium channels (Kv). The sequence is that of Potassium channel toxin MeuTXKalpha3 from Mesobuthus eupeus (Lesser Asian scorpion).